Here is a 105-residue protein sequence, read N- to C-terminus: Large ribosomal subunit protein bL21 (105 aa).

Belongs to the bacterial ribosomal protein bL21 family. In terms of assembly, part of the 50S ribosomal subunit. Contacts protein L20.

This protein binds to 23S rRNA in the presence of protein L20. The chain is Large ribosomal subunit protein bL21 from Thermotoga maritima (strain ATCC 43589 / DSM 3109 / JCM 10099 / NBRC 100826 / MSB8).